Reading from the N-terminus, the 449-residue chain is Required for meiotic nuclear division protein 1 homolog (449 aa).

Residues M1–L16 constitute a mitochondrion transit peptide.

The protein belongs to the RMD1/sif2 family. As to quaternary structure, homooligomer.

It is found in the mitochondrion. In terms of biological role, required for mitochondrial translation, possibly by coordinating the assembly or maintenance of the mitochondrial ribosome. The sequence is that of Required for meiotic nuclear division protein 1 homolog (RMND1) from Pongo abelii (Sumatran orangutan).